Here is a 156-residue protein sequence, read N- to C-terminus: Small ribosomal subunit protein uS7c (156 aa).

Belongs to the universal ribosomal protein uS7 family. As to quaternary structure, part of the 30S ribosomal subunit.

The protein localises to the plastid. It is found in the chloroplast. Its function is as follows. One of the primary rRNA binding proteins, it binds directly to 16S rRNA where it nucleates assembly of the head domain of the 30S subunit. In Euglena gracilis, this protein is Small ribosomal subunit protein uS7c (rps7).